We begin with the raw amino-acid sequence, 333 residues long: Phenylalanine--tRNA ligase alpha subunit (333 aa).

Residue E254 participates in Mg(2+) binding.

This sequence belongs to the class-II aminoacyl-tRNA synthetase family. Phe-tRNA synthetase alpha subunit type 1 subfamily. Tetramer of two alpha and two beta subunits. Mg(2+) serves as cofactor.

The protein localises to the cytoplasm. It carries out the reaction tRNA(Phe) + L-phenylalanine + ATP = L-phenylalanyl-tRNA(Phe) + AMP + diphosphate + H(+). This Xylella fastidiosa (strain 9a5c) protein is Phenylalanine--tRNA ligase alpha subunit (pheS).